The primary structure comprises 285 residues: Bifunctional protein FolD (285 aa).

NADP(+) is bound by residues 166–168 (GRS), Ser191, and Thr232.

It belongs to the tetrahydrofolate dehydrogenase/cyclohydrolase family. As to quaternary structure, homodimer.

The catalysed reaction is (6R)-5,10-methylene-5,6,7,8-tetrahydrofolate + NADP(+) = (6R)-5,10-methenyltetrahydrofolate + NADPH. The enzyme catalyses (6R)-5,10-methenyltetrahydrofolate + H2O = (6R)-10-formyltetrahydrofolate + H(+). It participates in one-carbon metabolism; tetrahydrofolate interconversion. Catalyzes the oxidation of 5,10-methylenetetrahydrofolate to 5,10-methenyltetrahydrofolate and then the hydrolysis of 5,10-methenyltetrahydrofolate to 10-formyltetrahydrofolate. The polypeptide is Bifunctional protein FolD (Chloroflexus aurantiacus (strain ATCC 29366 / DSM 635 / J-10-fl)).